The primary structure comprises 396 residues: Elongation factor Tu (396 aa).

The region spanning 10–206 (KPHCNIGTIG…AVDAYIPQPE (197 aa)) is the tr-type G domain. The G1 stretch occupies residues 19–26 (GHVDHGKT). 19–26 (GHVDHGKT) lines the GTP pocket. Position 26 (T26) interacts with Mg(2+). Residues 60–64 (GITIS) form a G2 region. Positions 81–84 (DCPG) are G3. GTP-binding positions include 81-85 (DCPGH) and 136-139 (NKVD). The segment at 136 to 139 (NKVD) is G4. The interval 174–176 (SAL) is G5.

The protein belongs to the TRAFAC class translation factor GTPase superfamily. Classic translation factor GTPase family. EF-Tu/EF-1A subfamily. As to quaternary structure, monomer.

It is found in the cytoplasm. It carries out the reaction GTP + H2O = GDP + phosphate + H(+). GTP hydrolase that promotes the GTP-dependent binding of aminoacyl-tRNA to the A-site of ribosomes during protein biosynthesis. This Parvibaculum lavamentivorans (strain DS-1 / DSM 13023 / NCIMB 13966) protein is Elongation factor Tu.